Reading from the N-terminus, the 78-residue chain is Large ribosomal subunit protein bL28 (78 aa).

It belongs to the bacterial ribosomal protein bL28 family.

The chain is Large ribosomal subunit protein bL28 from Hamiltonella defensa subsp. Acyrthosiphon pisum (strain 5AT).